The sequence spans 138 residues: Basic phospholipase A2 vurtoxin (138 aa).

Residues 1–16 (MRTLWIVAVCLIGVEG) form the signal peptide. Disulfide bonds link Cys-42/Cys-131, Cys-44/Cys-60, Cys-59/Cys-111, Cys-65/Cys-138, Cys-66/Cys-104, Cys-73/Cys-97, and Cys-91/Cys-102. 3 residues coordinate Ca(2+): Tyr-43, Gly-45, and Gly-47. His-63 is an active-site residue. Asp-64 is a Ca(2+) binding site. Residue Asp-105 is part of the active site.

Requires Ca(2+) as cofactor. Expressed by the venom gland.

The protein localises to the secreted. The enzyme catalyses a 1,2-diacyl-sn-glycero-3-phosphocholine + H2O = a 1-acyl-sn-glycero-3-phosphocholine + a fatty acid + H(+). Snake venom phospholipase A2 that may have a strong anticoagulant activity. Is able to suppress the acetylcholine (ACh)-evoked current mediated by alpha-7 (CHRNA7)-similar nAChRs in L.stagnalis neurons (IC(50)=10.5 uM) and to compete with alpha-bungarotoxin for binding to muscle- and alpha-7 neuronal nAChR types, as well as to AChBPs. In inhibition of alpha-bungarotoxin binding, this toxin is mostly active against T.californica nAChR (IC(50)=0.26 uM), it is moderately active against human alpha-7 nAChR (IC(50)=14 uM), and is not active against L.stagnalis and A.californica AChBP (IC(50)&gt;30 uM). In Vipera renardi (Steppe viper), this protein is Basic phospholipase A2 vurtoxin.